The primary structure comprises 86 residues: Small ribosomal subunit protein bS20 (86 aa).

The tract at residues 1–22 (MANIKSQIKRIRTNERRRLRNQ) is disordered. The segment covering 7-20 (QIKRIRTNERRRLR) has biased composition (basic residues).

This sequence belongs to the bacterial ribosomal protein bS20 family.

In terms of biological role, binds directly to 16S ribosomal RNA. This chain is Small ribosomal subunit protein bS20, found in Mycolicibacterium smegmatis (strain ATCC 700084 / mc(2)155) (Mycobacterium smegmatis).